A 585-amino-acid chain; its full sequence is Arginine--tRNA ligase (585 aa).

A 'HIGH' region motif is present at residues 131–141 (ANPTGPMHVGH).

The protein belongs to the class-I aminoacyl-tRNA synthetase family. In terms of assembly, monomer.

The protein resides in the cytoplasm. The catalysed reaction is tRNA(Arg) + L-arginine + ATP = L-arginyl-tRNA(Arg) + AMP + diphosphate. The sequence is that of Arginine--tRNA ligase from Agrobacterium fabrum (strain C58 / ATCC 33970) (Agrobacterium tumefaciens (strain C58)).